The chain runs to 90 residues: Conotoxin ba9a (90 aa).

An N-terminal signal peptide occupies residues Met-1 to Pro-27. The propeptide occupies Gly-28–Arg-62. Glu-67 carries the 4-carboxyglutamate modification. Pro-76 and Pro-80 each carry 4-hydroxyproline.

Expressed by the venom duct.

The protein localises to the secreted. This is Conotoxin ba9a from Conus bayani (Bayan's cone).